We begin with the raw amino-acid sequence, 313 residues long: Acetyl-coenzyme A carboxylase carboxyl transferase subunit beta (313 aa).

The 270-residue stretch at 24-293 (LWIKCPDSGQ…LETASKSVQP (270 aa)) folds into the CoA carboxyltransferase N-terminal domain.

It belongs to the AccD/PCCB family. As to quaternary structure, acetyl-CoA carboxylase is a heterohexamer composed of biotin carboxyl carrier protein (AccB), biotin carboxylase (AccC) and two subunits each of ACCase subunit alpha (AccA) and ACCase subunit beta (AccD).

Its subcellular location is the cytoplasm. The enzyme catalyses N(6)-carboxybiotinyl-L-lysyl-[protein] + acetyl-CoA = N(6)-biotinyl-L-lysyl-[protein] + malonyl-CoA. It functions in the pathway lipid metabolism; malonyl-CoA biosynthesis; malonyl-CoA from acetyl-CoA: step 1/1. In terms of biological role, component of the acetyl coenzyme A carboxylase (ACC) complex. Biotin carboxylase (BC) catalyzes the carboxylation of biotin on its carrier protein (BCCP) and then the CO(2) group is transferred by the transcarboxylase to acetyl-CoA to form malonyl-CoA. This Bradyrhizobium diazoefficiens (strain JCM 10833 / BCRC 13528 / IAM 13628 / NBRC 14792 / USDA 110) protein is Acetyl-coenzyme A carboxylase carboxyl transferase subunit beta.